An 807-amino-acid chain; its full sequence is Glycerol-3-phosphate acyltransferase (807 aa).

The short motif at cysteine 308–methionine 313 is the HXXXXD motif element.

This sequence belongs to the GPAT/DAPAT family.

The protein localises to the cell inner membrane. It catalyses the reaction sn-glycerol 3-phosphate + an acyl-CoA = a 1-acyl-sn-glycero-3-phosphate + CoA. Its pathway is phospholipid metabolism; CDP-diacylglycerol biosynthesis; CDP-diacylglycerol from sn-glycerol 3-phosphate: step 1/3. In Shewanella baltica (strain OS155 / ATCC BAA-1091), this protein is Glycerol-3-phosphate acyltransferase.